We begin with the raw amino-acid sequence, 171 residues long: Early E1A protein (171 aa).

Residues 40–48 (PTLHDLFDV) are interaction with RB1 in competition with E2F1. Residues 67–96 (DTDSSASTEGDSGFSPLSTPPVSPIPPHPT) are disordered. The segment covering 84-96 (STPPVSPIPPHPT) has biased composition (pro residues). An LXCXE motif, interaction with host RB1 motif is present at residues 106-110 (LLCLE). A zinc finger lies at 145 to 163 (CLRCAFYQEQDDNALCGLC). The Nuclear localization signal signature appears at 166–171 (KGPCRR).

It belongs to the adenoviridae E1A protein family. In terms of assembly, interacts with host UBE2I; this interaction interferes with polySUMOylation. Interacts with host RB1; this interaction induces the aberrant dissociation of RB1-E2F1 complex thereby disrupting the activity of RB1 and activating E2F1-regulated genes. Interacts with host ATF7; the interaction enhances ATF7-mediated viral transactivation activity which requires the zinc binding domains of both proteins. Isoform early E1A 32 kDa protein and isoform early E1A 26 kDa protein interact (via N-terminus) with CUL1 and E3 ubiquitin ligase RBX1; these interactions inhibit RBX1-CUL1-dependent elongation reaction of ubiquitin chains and attenuate ubiquitination of SCF(FBXW7) target proteins. Interacts (via PXLXP motif) with host ZMYND11/BS69 (via MYND-type zinc finger); this interaction inhibits E1A mediated transactivation. Interacts with host EP300; this interaction stimulates the acetylation of RB1 by recruiting EP300 and RB1 into a multimeric-protein complex. Interacts with host CTBP1 and CTBP2; this interaction seems to potentiate viral replication. Interacts with host DCAF7. Interacts with host DYRK1A. Interacts with host KPNA4; this interaction allows E1A import into the host nucleus. Interacts with host EP400; this interaction stabilizes MYC. Interacts with host TBP protein; this interaction probably disrupts the TBP-TATA complex.

It is found in the host nucleus. Its function is as follows. Plays a role in viral genome replication by driving entry of quiescent cells into the cell cycle. Stimulation of progression from G1 to S phase allows the virus to efficiently use the cellular DNA replicating machinery to achieve viral genome replication. E1A protein has both transforming and trans-activating activities. Induces the disassembly of the E2F1 transcription factor from RB1 by direct competition for the same binding site on RB1, with subsequent transcriptional activation of E2F1-regulated S-phase genes and of the E2 region of the adenoviral genome. Release of E2F1 leads to the ARF-mediated inhibition of MDM2 and causes TP53/p53 to accumulate because it is not targeted for degradation by MDM2-mediated ubiquitination anymore. This increase in TP53, in turn, would arrest the cell proliferation and direct its death but this effect is counteracted by the viral protein E1B-55K. Inactivation of the ability of RB1 to arrest the cell cycle is critical for cellular transformation, uncontrolled cellular growth and proliferation induced by viral infection. Interaction with RBX1 and CUL1 inhibits ubiquitination of the proteins targeted by SCF(FBXW7) ubiquitin ligase complex, and may be linked to unregulated host cell proliferation. The tumorigenesis-restraining activity of E1A may be related to the disruption of the host CtBP-CtIP complex through the CtBP binding motif. In Canis lupus familiaris (Dog), this protein is Early E1A protein.